The sequence spans 451 residues: UPF0210 protein NGO_1297 (451 aa).

Belongs to the UPF0210 family. Homodimer.

In Neisseria gonorrhoeae (strain ATCC 700825 / FA 1090), this protein is UPF0210 protein NGO_1297.